A 112-amino-acid chain; its full sequence is Probable insulin-like peptide beta-type 5 (112 aa).

A signal peptide spans 1–19; that stretch reads MNSVFTIIFVLCALQVAAS. A propeptide spans 20 to 58 (removed; by convertase egl-3); the sequence is FRQSFGPSMSEESASMQLLRELQHNMMESAHRPMPRARR. 4 disulfides stabilise this stretch: C68-C97, C80-C110, C84-C111, and C96-C101.

It belongs to the insulin family. Post-translationally, may be processed by serine endoprotease bli-4. In terms of tissue distribution, expressed by ASI and ASJ sensory neurons.

Its subcellular location is the secreted. Probable insulin-like peptide which negatively regulates synapse development at the neuromuscular junctions. Probably acts as a daf-2/InsR agonist ligand to prevent dauer formation under optimal environmental conditions. Acts on AWC sensory neurons to regulate high salt chemotaxis responses. The polypeptide is Probable insulin-like peptide beta-type 5 (ins-6) (Caenorhabditis elegans).